A 250-amino-acid polypeptide reads, in one-letter code: S-adenosyl-L-methionine-dependent 2-deoxy-scyllo-inosamine dehydrogenase (250 aa).

Cysteine 16, cysteine 20, cysteine 23, cysteine 169, cysteine 187, and glutamate 223 together coordinate [4Fe-4S] cluster.

Belongs to the radical SAM superfamily. [4Fe-4S] cluster is required as a cofactor.

The enzyme catalyses 2-deoxy-scyllo-inosamine + S-adenosyl-L-methionine = 3-amino-2,3-dideoxy-scyllo-inosose + 5'-deoxyadenosine + L-methionine + H(+). It participates in antibiotic biosynthesis; butirosin biosynthesis. Catalyzes the radical S-adenosyl-L-methionine (SAM)-dependent two-electron oxidation of 2-deoxy-scyllo-inosamine (DOIA) to amino-dideoxy-scyllo-inosose (amino-DOI) in the biosynthetic pathway of butirosin. The polypeptide is S-adenosyl-L-methionine-dependent 2-deoxy-scyllo-inosamine dehydrogenase (btrN) (Niallia circulans (Bacillus circulans)).